A 334-amino-acid chain; its full sequence is Mevalonate kinase (334 aa).

110–120 (PVGAGLGSSAA) is a binding site for ATP. The Proton acceptor role is filled by D161.

Belongs to the GHMP kinase family. Mevalonate kinase subfamily. As to quaternary structure, homodimer. Requires Mg(2+) as cofactor.

It localises to the cytoplasm. It catalyses the reaction (R)-mevalonate + ATP = (R)-5-phosphomevalonate + ADP + H(+). It participates in isoprenoid biosynthesis; isopentenyl diphosphate biosynthesis via mevalonate pathway; isopentenyl diphosphate from (R)-mevalonate: step 1/3. Catalyzes the phosphorylation of (R)-mevalonate (MVA) to (R)-mevalonate 5-phosphate (MVAP). Functions in the mevalonate (MVA) pathway leading to isopentenyl diphosphate (IPP), a key precursor for the biosynthesis of isoprenoid compounds such as archaeal membrane lipids. The polypeptide is Mevalonate kinase (Thermococcus onnurineus (strain NA1)).